The sequence spans 214 residues: dITP/XTP pyrophosphatase (214 aa).

13-18 (SHNKGK) is a substrate binding site. Residues glutamate 45 and aspartate 74 each coordinate Mg(2+). Residue aspartate 74 is the Proton acceptor of the active site. Substrate is bound by residues serine 75, 163 to 166 (FGYD), lysine 186, and 199 to 200 (HR).

Belongs to the HAM1 NTPase family. Homodimer. The cofactor is Mg(2+).

It carries out the reaction XTP + H2O = XMP + diphosphate + H(+). The enzyme catalyses dITP + H2O = dIMP + diphosphate + H(+). The catalysed reaction is ITP + H2O = IMP + diphosphate + H(+). Pyrophosphatase that catalyzes the hydrolysis of nucleoside triphosphates to their monophosphate derivatives, with a high preference for the non-canonical purine nucleotides XTP (xanthosine triphosphate), dITP (deoxyinosine triphosphate) and ITP. Seems to function as a house-cleaning enzyme that removes non-canonical purine nucleotides from the nucleotide pool, thus preventing their incorporation into DNA/RNA and avoiding chromosomal lesions. In Agrobacterium fabrum (strain C58 / ATCC 33970) (Agrobacterium tumefaciens (strain C58)), this protein is dITP/XTP pyrophosphatase.